The primary structure comprises 316 residues: Methionyl-tRNA formyltransferase (316 aa).

110–113 (SLLP) serves as a coordination point for (6S)-5,6,7,8-tetrahydrofolate.

The protein belongs to the Fmt family.

It catalyses the reaction L-methionyl-tRNA(fMet) + (6R)-10-formyltetrahydrofolate = N-formyl-L-methionyl-tRNA(fMet) + (6S)-5,6,7,8-tetrahydrofolate + H(+). Attaches a formyl group to the free amino group of methionyl-tRNA(fMet). The formyl group appears to play a dual role in the initiator identity of N-formylmethionyl-tRNA by promoting its recognition by IF2 and preventing the misappropriation of this tRNA by the elongation apparatus. In Bacillus licheniformis (strain ATCC 14580 / DSM 13 / JCM 2505 / CCUG 7422 / NBRC 12200 / NCIMB 9375 / NCTC 10341 / NRRL NRS-1264 / Gibson 46), this protein is Methionyl-tRNA formyltransferase.